We begin with the raw amino-acid sequence, 147 residues long: Large ribosomal subunit protein uL13 (147 aa).

It belongs to the universal ribosomal protein uL13 family. As to quaternary structure, part of the 50S ribosomal subunit.

Functionally, this protein is one of the early assembly proteins of the 50S ribosomal subunit, although it is not seen to bind rRNA by itself. It is important during the early stages of 50S assembly. This is Large ribosomal subunit protein uL13 from Salinispora arenicola (strain CNS-205).